Consider the following 152-residue polypeptide: UPF0178 protein KPN78578_03210 (152 aa).

The protein belongs to the UPF0178 family.

The chain is UPF0178 protein KPN78578_03210 from Klebsiella pneumoniae subsp. pneumoniae (strain ATCC 700721 / MGH 78578).